A 390-amino-acid chain; its full sequence is Chorismate synthase (390 aa).

2 residues coordinate NADP(+): arginine 39 and arginine 45. FMN is bound by residues 132–134 (RSS), 253–254 (NA), glycine 298, 313–317 (KPIPT), and arginine 339.

This sequence belongs to the chorismate synthase family. Homotetramer. FMNH2 serves as cofactor.

It carries out the reaction 5-O-(1-carboxyvinyl)-3-phosphoshikimate = chorismate + phosphate. Its pathway is metabolic intermediate biosynthesis; chorismate biosynthesis; chorismate from D-erythrose 4-phosphate and phosphoenolpyruvate: step 7/7. In terms of biological role, catalyzes the anti-1,4-elimination of the C-3 phosphate and the C-6 proR hydrogen from 5-enolpyruvylshikimate-3-phosphate (EPSP) to yield chorismate, which is the branch point compound that serves as the starting substrate for the three terminal pathways of aromatic amino acid biosynthesis. This reaction introduces a second double bond into the aromatic ring system. This Bacillus licheniformis (strain ATCC 14580 / DSM 13 / JCM 2505 / CCUG 7422 / NBRC 12200 / NCIMB 9375 / NCTC 10341 / NRRL NRS-1264 / Gibson 46) protein is Chorismate synthase.